Reading from the N-terminus, the 147-residue chain is Ponticulin-like protein C4 (147 aa).

Residues 1–20 form the signal peptide; that stretch reads MKFTKSLLLLIVAVFASSNA. Asn118 is lipidated: GPI-like-anchor amidated asparagine. An N-linked (GlcNAc...) asparagine glycan is attached at Asn118. Residues 119 to 147 constitute a propeptide, removed in mature form; that stretch reads SSESDSSDSTRIGASFALAAAALLSMIAL.

Belongs to the ponticulin family. The GPI-like-anchor contains a phosphoceramide group, rather than a phosphatidyl group.

The protein resides in the cell membrane. The protein is Ponticulin-like protein C4 (ponC4) of Dictyostelium discoideum (Social amoeba).